We begin with the raw amino-acid sequence, 280 residues long: Pantothenate synthetase (280 aa).

Residue 31 to 38 coordinates ATP; sequence MGNLHVGH. Residue His38 is the Proton donor of the active site. Gln62 contributes to the (R)-pantoate binding site. Position 62 (Gln62) interacts with beta-alanine. 150–153 contributes to the ATP binding site; that stretch reads GKKD. Position 156 (Gln156) interacts with (R)-pantoate. ATP is bound by residues Val179 and 187–190; that span reads MSSR.

It belongs to the pantothenate synthetase family. As to quaternary structure, homodimer.

The protein resides in the cytoplasm. The catalysed reaction is (R)-pantoate + beta-alanine + ATP = (R)-pantothenate + AMP + diphosphate + H(+). It participates in cofactor biosynthesis; (R)-pantothenate biosynthesis; (R)-pantothenate from (R)-pantoate and beta-alanine: step 1/1. Functionally, catalyzes the condensation of pantoate with beta-alanine in an ATP-dependent reaction via a pantoyl-adenylate intermediate. The chain is Pantothenate synthetase from Xanthomonas oryzae pv. oryzae (strain MAFF 311018).